Consider the following 318-residue polypeptide: N-acyl-aromatic-L-amino acid amidohydrolase (carboxylate-forming) (318 aa).

The interval Met-1 to Gln-210 is hydrolytic domain. Zn(2+)-binding residues include His-21 and Glu-24. Residues Arg-63 and Asn-70–Arg-71 contribute to the substrate site. His-116 lines the Zn(2+) pocket. Residues Glu-177 and Tyr-287 each contribute to the substrate site. Positions Gly-211–Pro-318 are shielding domain. Thr-317 is modified (phosphothreonine).

It belongs to the AspA/AstE family. Aspartoacylase subfamily. As to quaternary structure, exists as a mixture of homodimers and homotetramer, both catalytically active. Zn(2+) serves as cofactor. In terms of tissue distribution, expressed predominantly in kidney and to a lesser extent in liver. Weakly expressed in heart, small intestine, brain, lung, testis, and stomach.

It localises to the apical cell membrane. Its subcellular location is the cytoplasm. The catalysed reaction is an N-acyl-aromatic L-alpha-amino acid + H2O = an aromatic L-alpha-amino acid + a carboxylate. It catalyses the reaction an N-acetyl-L-cysteine-S-conjugate + H2O = an S-substituted L-cysteine + acetate. Functionally, plays an important role in deacetylating mercapturic acids in kidney proximal tubules. Also acts on N-acetyl-aromatic amino acids. This is N-acyl-aromatic-L-amino acid amidohydrolase (carboxylate-forming) (Acy3) from Mus musculus (Mouse).